The following is a 119-amino-acid chain: MPRVKGGYVARRRRKKVLKLAKGYYGSKHTLFKSAQGQVMKSLQYAYRDRRQKKRDFRKLWITRINAAARLNGLSYSRLMHGLKLAEINVNRKMLADLAVNDEKAFAQLADKAKESLNS.

Belongs to the bacterial ribosomal protein bL20 family.

Functionally, binds directly to 23S ribosomal RNA and is necessary for the in vitro assembly process of the 50S ribosomal subunit. It is not involved in the protein synthesizing functions of that subunit. This is Large ribosomal subunit protein bL20 from Shouchella clausii (strain KSM-K16) (Alkalihalobacillus clausii).